Here is a 184-residue protein sequence, read N- to C-terminus: UPF0149 protein Avin_47340 (184 aa).

Belongs to the UPF0149 family.

This chain is UPF0149 protein Avin_47340, found in Azotobacter vinelandii (strain DJ / ATCC BAA-1303).